Consider the following 501-residue polypeptide: Probable cytosol aminopeptidase (501 aa).

Mn(2+)-binding residues include Lys-270 and Asp-275. The active site involves Lys-282. The Mn(2+) site is built by Asp-293, Asp-352, and Glu-354. Arg-356 is a catalytic residue.

The protein belongs to the peptidase M17 family. It depends on Mn(2+) as a cofactor.

It is found in the cytoplasm. It carries out the reaction Release of an N-terminal amino acid, Xaa-|-Yaa-, in which Xaa is preferably Leu, but may be other amino acids including Pro although not Arg or Lys, and Yaa may be Pro. Amino acid amides and methyl esters are also readily hydrolyzed, but rates on arylamides are exceedingly low.. It catalyses the reaction Release of an N-terminal amino acid, preferentially leucine, but not glutamic or aspartic acids.. Presumably involved in the processing and regular turnover of intracellular proteins. Catalyzes the removal of unsubstituted N-terminal amino acids from various peptides. The polypeptide is Probable cytosol aminopeptidase (Wigglesworthia glossinidia brevipalpis).